The following is a 197-amino-acid chain: Wadjet protein JetB (197 aa).

Component of antiplasmid transformation system Wadjet type I, composed of JetA, JetB, JetC and JetD. Expression of Wadjet type I in B.subtilis (strain BEST7003) reduces the transformation efficiency of plasmid pHCMC05. This chain is Wadjet protein JetB, found in Bacillus cereus (strain Q1).